Consider the following 425-residue polypeptide: MNTTTCTHKDNPNFWIFGLFFFLYFFIMATCFPFLPIWLSDIIGLNKTHTGIVFSCISLSAIAFQPVLGVISDKLGLKKHLLWIISVLLFLFAPFFLYVFAPLLKTNIWLGALSGGLYIGFVFSAGSGAIEAYIERVSRNSAFEYGKARMFGCLGWGLCASTGGILFGIDPSYVFWMGSAAALLLMLLLVVAKPKPNQTAQVMNALGANQPQITAKKVFNLFRQRRMWMFILYVIGVACVYDVFDQQFATFFKTFFATPQEGTRAFGFATTAGEICNAIIMFCSPWIINRIGAKNTLLIAGLIMATRIIGSSFATTAVEVIALKMLHALEVPFLLVGAFKYITGVFDTRLSATIYLIGFQFAKQSAAIFLSAFAGNMYDRIGFQETYLMLGCFVLAITVVSAFTLSSRQEIAAAAGAAALTSQSR.

Residues 1–13 are Cytoplasmic-facing; that stretch reads MNTTTCTHKDNPN. A helical transmembrane segment spans residues 14–34; it reads FWIFGLFFFLYFFIMATCFPF. The Periplasmic portion of the chain corresponds to 35–50; the sequence is LPIWLSDIIGLNKTHT. Residues 51–71 form a helical membrane-spanning segment; that stretch reads GIVFSCISLSAIAFQPVLGVI. Topologically, residues 72-80 are cytoplasmic; that stretch reads SDKLGLKKH. The chain crosses the membrane as a helical span at residues 81 to 101; that stretch reads LLWIISVLLFLFAPFFLYVFA. The Periplasmic portion of the chain corresponds to 102 to 107; the sequence is PLLKTN. A helical membrane pass occupies residues 108–128; sequence IWLGALSGGLYIGFVFSAGSG. The Cytoplasmic portion of the chain corresponds to 129 to 149; that stretch reads AIEAYIERVSRNSAFEYGKAR. Residues 150 to 170 traverse the membrane as a helical segment; sequence MFGCLGWGLCASTGGILFGID. Position 171 (proline 171) is a topological domain, periplasmic. The helical transmembrane segment at 172–192 threads the bilayer; the sequence is SYVFWMGSAAALLLMLLLVVA. Residues 193-227 are Cytoplasmic-facing; that stretch reads KPKPNQTAQVMNALGANQPQITAKKVFNLFRQRRM. The chain crosses the membrane as a helical span at residues 228 to 248; it reads WMFILYVIGVACVYDVFDQQF. Residues 249–267 lie on the Periplasmic side of the membrane; that stretch reads ATFFKTFFATPQEGTRAFG. A helical transmembrane segment spans residues 268 to 288; the sequence is FATTAGEICNAIIMFCSPWII. Residues 289-297 are Cytoplasmic-facing; sequence NRIGAKNTL. Residues 298–318 form a helical membrane-spanning segment; it reads LIAGLIMATRIIGSSFATTAV. Residues 319-325 lie on the Periplasmic side of the membrane; the sequence is EVIALKM. A helical transmembrane segment spans residues 326–346; sequence LHALEVPFLLVGAFKYITGVF. Over 347–353 the chain is Cytoplasmic; that stretch reads DTRLSAT. Residues 354 to 374 traverse the membrane as a helical segment; sequence IYLIGFQFAKQSAAIFLSAFA. Topologically, residues 375-385 are periplasmic; that stretch reads GNMYDRIGFQE. A helical transmembrane segment spans residues 386–406; sequence TYLMLGCFVLAITVVSAFTLS. At 407 to 425 the chain is on the cytoplasmic side; it reads SRQEIAAAAGAAALTSQSR.

The protein belongs to the major facilitator superfamily. Oligosaccharide:H(+) symporter (OHS) (TC 2.A.1.5) family.

It localises to the cell inner membrane. In terms of biological role, responsible for transport of melibiose into the cell, with the concomitant import of a proton (symport system). Can also transport lactose, and has weak activity with maltose. Cannot transport the analog methyl-1-thio-beta,D-galactopyranoside (TMG). The sequence is that of Melibiose permease from Enterobacter cloacae subsp. cloacae (strain ATCC 13047 / DSM 30054 / NBRC 13535 / NCTC 10005 / WDCM 00083 / NCDC 279-56).